The primary structure comprises 178 residues: Inorganic pyrophosphatase (178 aa).

Residues Lys-30, Arg-44, and Tyr-56 each coordinate substrate. Mg(2+)-binding residues include Asp-66, Asp-71, and Asp-103. Tyr-140 contributes to the substrate binding site.

The protein belongs to the PPase family. In terms of assembly, homohexamer. It depends on Mg(2+) as a cofactor.

Its subcellular location is the cytoplasm. It carries out the reaction diphosphate + H2O = 2 phosphate + H(+). Catalyzes the hydrolysis of inorganic pyrophosphate (PPi) forming two phosphate ions. The protein is Inorganic pyrophosphatase of Pyrococcus abyssi (strain GE5 / Orsay).